The following is a 1088-amino-acid chain: Adenylate-forming reductase Nps10 (1088 aa).

Residues 1 to 22 are disordered; sequence MSSVSIQIPLPTPPPTQAHNSQ. The adenylation (A) domain stretch occupies residues 38–451; it reads FDWHSKNSPN…KIFGRTDDQI (414 aa). Residues His-261, 357–358, Thr-362, and 443–446 each bind AMP; these read NL and IFGR. The 83-residue stretch at 586-668 folds into the Carrier domain; that stretch reads AWDSAKTLGF…SLASFVSSVA (83 aa). Ser-621 carries the O-(pantetheine 4'-phosphoryl)serine modification. The segment at 712–951 is reductase (R) domain; it reads LTGSTGALGS…IPVNVAAAAI (240 aa). NADP(+)-binding positions include 716 to 719, 804 to 806, Tyr-875, and Lys-879; these read TGAL and NAW.

Belongs to the adenylate-forming reductase family.

Adenylate-forming reductase, a natural product biosynthesis enzyme that resembles non-ribosomal peptide synthetases, yet serves to modify one substrate, rather than to condense two or more building blocks. The A-domain preferentially accepts phenylpyruvic acid and benzoic acid as substrate. The natural product of the enzyme is not yet known. This Heterobasidion annosum (Root rot fungus) protein is Adenylate-forming reductase Nps10.